We begin with the raw amino-acid sequence, 224 residues long: UPF0758 protein VP0184 (224 aa).

Residues 102 to 224 (ALTSPEQTKL…SVSFAERGWI (123 aa)) form the MPN domain. The Zn(2+) site is built by His-173, His-175, and Asp-186. The JAMM motif motif lies at 173–186 (HNHPSGVAEPSQAD).

The protein belongs to the UPF0758 family.

This chain is UPF0758 protein VP0184, found in Vibrio parahaemolyticus serotype O3:K6 (strain RIMD 2210633).